A 284-amino-acid chain; its full sequence is N-acylphosphatidylethanolamine synthase (284 aa).

Residues 21–37 form a helical membrane-spanning segment; sequence TVIMAVSAFAKAVANLC. The short motif at 67 to 72 is the HXXXXD motif element; the sequence is HMSTLD. The interval 122–163 is hydrophilic; it reads GGGIYQENMNEALQRLKDGSWLHTFPEGKVFQDDVPIRRLKW.

This sequence belongs to the taffazin family. Essentially present in young tissues. Expressed in roots, cotyledons, leaves, and shoot and root apical meristems.

The protein localises to the cell membrane. Its function is as follows. Acyltransferase that catalyzes the N-acylation of phosphatidylethanolamine to form N-acylphosphatidylethanolamine (N-acyl-PE) (e.g. NAPEs containing C16:0, C16:1, C18:0, and C18:1). Also mediates the formation of acylphosphatidylglycerol (acyl-PG) from lysoglycerophospholipid by O-acylation. Uses acyl-CoA as acyl donors. Acylates 1-acyllysophosphatidylethanolamine (1-acyllyso-PE) and 1-acyllysophosphatidylglycerol (1-acyllyso-PG) at the sn-2-position. The protein is N-acylphosphatidylethanolamine synthase of Arabidopsis thaliana (Mouse-ear cress).